Consider the following 549-residue polypeptide: MKRVLTALAATLPFAANAADAISGAVERQPTNWQAIIMFLIFVVFTLGITYWASKRVRSRNDYYTAGGNITGFQNGLAIAGDYMSAASFLGISALVFTSGYDGLIYSLGFLVGWPIILFLIAERLRNLGRYTFADVASYRLKQGPIRILSACGSLVVVALYLIAQMVGAGKLIELLFGLNYHIAVVLVGVLMMMYVLFGGMLATTWVQIIKAVLLLFGASFMAFMVMKHVGFSFNNLFSEAMAVHPKGVDIMKPGGLVKDPISALSLGLGLMFGTAGLPHILMRFFTVSDAREARKSVFYATGFMGYFYILTFIIGFGAIMLVGANPEYKDAAGHLIGGNNMAAVHLANAVGGNLFLGFISAVAFATILAVVAGLTLAGASAVSHDLYANVFKKGATEREELRVSKITVLILGVIAIILGVLFENQNIAFMVGLAFAIAASCNFPIILLSMYWSKLTTRGAMLGGWLGLITAVVLMILGPTIWVQILGHEKAIFPYEYPALFSISVAFLGIWLFSATDNSAEGARERELFRAQFIRSQTGFGVEQGRAH.

13 consecutive transmembrane segments (helical) span residues 33 to 53 (WQAI…TYWA), 77 to 97 (LAIA…ALVF), 103 to 123 (GLIY…LIAE), 148 to 168 (ILSA…QMVG), 183 to 203 (IAVV…GMLA), 206 to 226 (WVQI…AFMV), 262 to 282 (ISAL…PHIL), 303 to 323 (GFMG…IMLV), 355 to 375 (LFLG…VAGL), 404 to 424 (VSKI…VLFE), 428 to 448 (IAFM…PIIL), 464 to 484 (GGWL…TIWV), and 493 to 513 (IFPY…GIWL).

This sequence belongs to the sodium:solute symporter (SSF) (TC 2.A.21) family.

Its subcellular location is the cell inner membrane. Transports acetate. The sequence is that of Cation/acetate symporter ActP from Escherichia coli O1:K1 / APEC.